We begin with the raw amino-acid sequence, 376 residues long: Transcription initiation factor IIA subunit 1 (376 aa).

N-acetylalanine is present on Ala-2. Composition is skewed to low complexity over residues 69–79 (QVQQQHQPQQQ) and 89–105 (QAQPQQTVPQQAQTQQV). 3 disordered regions span residues 69-107 (QVQQQHQPQQQQHHHHHHHQQAQPQQTVPQQAQTQQVLI), 246-265 (AQAQITATGHQQPQAQPAQT), and 274-329 (DGTG…QELF). 4 positions are modified to phosphoserine; by TAF1: Ser-280, Ser-281, Ser-316, and Ser-321. Over residues 280–329 (SSEEDEDEEEDYDDDEEEDKEKDGAEDGQVEEEPLNSEDDVSDEEGQELF) the composition is skewed to acidic residues. DNA contacts are provided by His-343 and Arg-344.

This sequence belongs to the TFIIA subunit 1 family. As to quaternary structure, TFIIA is a heterodimer of the large unprocessed subunit 1 and a small subunit gamma. It was originally believed to be a heterotrimer of an alpha (p35), a beta (p19) and a gamma subunit (p12). TFIIA forms a complex with TBP. Part of TBP-based Pol II pre-initiation complex (PIC), in which Pol II core assembles with general transcription factors and other specific initiation factors including GTF2E1, GTF2E2, GTF2F1, GTF2F2, TCEA1, ERCC2, ERCC3, GTF2H2, GTF2H3, GTF2H4, GTF2H5, GTF2A1, GTF2A2, GTF2B and TBP; this large multi-subunit PIC complex mediates DNA unwinding and targets Pol II core to the transcription start site where the first phosphodiester bond forms. The alpha and beta subunits are postranslationally produced from the precursor formby TASP1. The cleavage promotes proteasomal degradation.

It is found in the nucleus. TFIIA is a component of the transcription machinery of RNA polymerase II and plays an important role in transcriptional activation. TFIIA in a complex with TBP mediates transcriptional activity. This chain is Transcription initiation factor IIA subunit 1 (GTF2A1), found in Pongo abelii (Sumatran orangutan).